Reading from the N-terminus, the 302-residue chain is Alpha-N-acetyl-neuraminyl-2,3-beta-galactosyl-1,3-N-acetyl-galactosaminide alpha-2,6-sialyltransferase (302 aa).

Residues 1-6 (MKAPGR) lie on the Cytoplasmic side of the membrane. A helical; Signal-anchor for type II membrane protein transmembrane segment spans residues 7–27 (LVLIILCSVVFSAVYILLCCW). The Lumenal segment spans residues 28-302 (AGLPLCLATC…VFAHPSWRTE (275 aa)). A disulfide bridge connects residues Cys-76 and Cys-225. N-linked (GlcNAc...) asparagine glycosylation occurs at Asn-135.

The protein belongs to the glycosyltransferase 29 family. Ubiquitous.

The protein localises to the golgi apparatus membrane. It carries out the reaction an alpha-Neu5Ac-(2-&gt;3)-beta-D-Gal-(1-&gt;3)-D-GlcNAc derivative + CMP-N-acetyl-beta-neuraminate = an alpha-Neu5Ac-(2-&gt;3)-beta-D-Gal-(1-&gt;3)-[alpha-Neu5Ac-(2-&gt;6)]-D-GlcNAc derivative + CMP + H(+). It catalyses the reaction N-acetyl-alpha-neuraminosyl-(2-&gt;3)-beta-D-galactosyl-(1-&gt;3)-N-acetyl-D-galactosamine + CMP-N-acetyl-beta-neuraminate = N-acetyl-alpha-neuraminosyl-(2-&gt;3)-beta-D-galactosyl-(1-&gt;3)-[N-acetyl-alpha-neuraminosyl-(2-&gt;6)]-N-acetyl-D-galactosamine + CMP + H(+). The catalysed reaction is a ganglioside GM1b (d18:1(4E)) + CMP-N-acetyl-beta-neuraminate = a ganglioside GD1alpha (d18:1(4E)) + CMP + H(+). The enzyme catalyses 3-O-[alpha-Neu5Ac-(2-&gt;3)-beta-D-Gal-(1-&gt;3)-alpha-D-GalNAc]-L-Ser-[protein] + CMP-N-acetyl-beta-neuraminate = a 3-O-{alpha-Neu5Ac-(2-&gt;3)-beta-D-Gal-(1-&gt;3)-[alpha-Neu5Ac-(2-&gt;6)]-alpha-D-GalNAc}-L-seryl-[protein] + CMP + H(+). It carries out the reaction 3-O-[alpha-Neu5Ac-(2-&gt;3)-beta-D-Gal-(1-&gt;3)-alpha-D-GalNAc]-L-Thr-[protein] + CMP-N-acetyl-beta-neuraminate = a 3-O-{alpha-Neu5Ac-(2-&gt;3)-beta-D-Gal-(1-&gt;3)-[alpha-Neu5Ac-(2-&gt;6)]-alpha-D-GalNAc}-L-threonyl-[protein] + CMP + H(+). It functions in the pathway protein modification; protein glycosylation. It participates in glycolipid biosynthesis. Functionally, transfers the sialyl group (N-acetyl-alpha-neuraminyl or NeuAc) from CMP-NeuAc to the GalNAc residue on the NeuAc-alpha-2,3-Gal-beta-1,3-GalNAc sequence of glycoproteins and glycolipids forming an alpha-2,6-linkage. Produces branched type disialyl structures by transfer of a sialyl group onto a GalNAc residue inside the backbone core chains. Prefers O-glycans to glycoproteins or glycolipids. This chain is Alpha-N-acetyl-neuraminyl-2,3-beta-galactosyl-1,3-N-acetyl-galactosaminide alpha-2,6-sialyltransferase (ST6GALNAC4), found in Homo sapiens (Human).